The chain runs to 117 residues: Large ribosomal subunit protein bL19 (117 aa).

This sequence belongs to the bacterial ribosomal protein bL19 family.

Its function is as follows. This protein is located at the 30S-50S ribosomal subunit interface and may play a role in the structure and function of the aminoacyl-tRNA binding site. The protein is Large ribosomal subunit protein bL19 of Bacteroides fragilis (strain ATCC 25285 / DSM 2151 / CCUG 4856 / JCM 11019 / LMG 10263 / NCTC 9343 / Onslow / VPI 2553 / EN-2).